A 420-amino-acid chain; its full sequence is Amino acid decarboxylase lolD1 (420 aa).

An N6-(pyridoxal phosphate)lysine modification is found at lysine 62. Residues serine 194, glycine 231, and 266 to 269 each bind pyridoxal 5'-phosphate; that span reads EPGT. Residue 315 to 316 participates in substrate binding; it reads IV. Cysteine 351 functions as the Proton donor; shared with dimeric partner in the catalytic mechanism. Position 351 is an S-nitrosocysteine (cysteine 351). Residue aspartate 352 coordinates substrate. A pyridoxal 5'-phosphate-binding site is contributed by tyrosine 381.

The protein belongs to the Orn/Lys/Arg decarboxylase class-II family. In terms of assembly, homodimer. Pyridoxal 5'-phosphate is required as a cofactor.

The protein operates within alkaloid biosynthesis. Amino acid decarboxylase; part of the gene cluster that mediates the biosynthesis of loline alkaloids, potent insecticidal agents composed of a pyrrolizidine ring system and an uncommon ether bridge linking carbons 2 and 7. Lolines are structurally differentiated by the various modifications of the L-amino group and include norloline, loline, N-methylloline, N-acetylloline, N-acetylnorloline, and N-formylloline. The first committed step is the condensation of O-acetyl-L-homoserine (derived from L-aspartic acid) and L-proline, probably catalyzed by the gamma-type pyridoxal 5'-phosphate(PLP)-dependent enzyme lolC, to give the diamino diacid, NACPP. Ensuing cyclization, decarboxylation, and acetylation steps yield 1-exo-acetamidopyrrolizidine (AcAP). LolO is required for installation of the ether bridge upon the pathway intermediate, 1-exo-acetamidopyrrolizidine (AcAP). In sequential 2-oxoglutarate- and O(2)-consuming steps, lolO removes hydrogens from C2 and C7 of AcAP to form both carbon-oxygen bonds in N-acetylnorloline (NANL), the precursor to all other lolines. The enzymes lolD, lolE, lolF and lolT have also been proposed to be involved in the ether-bridge installation. Further processing of the exocyclic moiety of NANL by fungal N-acetamidase (LolN), methyltransferase (LolM), and cytochrome P450 (LolP) enzymes, with occasional involvement of a plant acetyltransferase, generates the other known lolines. LolN transforms NANL to norlonine which is monomethylated and dimethylated to respectively lonine and N-methyllonine (NML) by lolM. LolP catalyzes hydroxylation of the methyl group in N-methylloline (NML) and further oxygenation to N-formylloline (NFL). A plant acetyltransferase is responsible for the acetylation of loline to form N-acetylloline (NAL). LolA might interact with aspartate kinase to prevent feedback inhibition of its activity by these end products and thereby promote production of L-homoserine from L-aspartate. The chain is Amino acid decarboxylase lolD1 from Epichloe uncinata (Endophyte fungus).